The chain runs to 444 residues: Aflatoxin biosynthesis regulatory protein (444 aa).

Residues 1-26 (MVDHISPRASPGPIRSSQTRRARKLR) form a disordered region. Residues 29-56 (CTSCASSKVRCTKEKPACARCIERGLAC) constitute a DNA-binding region (zn(2)-C6 fungal-type). Residues 64–167 (MGRNPRAPSP…QGLGGDLAGQ (104 aa)) are disordered. Residues 106–116 (TQAHTHAHSHP) are compositionally biased toward basic residues. Low complexity predominate over residues 120 to 130 (PQSHPQSNQPP). The span at 136-149 (PNGSSSVSAIFSHQ) shows a compositional bias: polar residues.

Interacts with its co-regulator aflS.

It is found in the nucleus. Its subcellular location is the endosome. Its function is as follows. Transcription factor involved in regulation of the aflatoxin biosynthesis gene cluster. Binds with its co-regulator aflS to AFLR1 elements (5'-TCGSWNNSCGR-3') present in the promoters of the aflatoxin cluster genes. The ratio of the expression data between aflS:aflR plays a crucial role in the regulation of aflatoxins production. A high ratio, produced at a range between 17 and 30 degrees Celsius, corresponds with the production profile of aflatoxin G1 biosynthesis. A low ratio, produced over 30 degrees Celsius, is related to aflatoxin B1 biosynthesis. In Aspergillus parasiticus (strain ATCC 56775 / NRRL 5862 / SRRC 143 / SU-1), this protein is Aflatoxin biosynthesis regulatory protein.